Here is a 403-residue protein sequence, read N- to C-terminus: Blue light- and temperature-regulated antirepressor BluF (403 aa).

One can recognise a BLUF domain in the interval 2-93 (LTTLIYRSHI…ARRFGKAGME (92 aa)). Residues 98–144 (RLHERDDVLQAVFDKGTSKFQLTYDDRALQFFRTFVLATEQSTYFEI) form a joining helix region. One can recognise an EAL domain in the interval 155 to 403 (DGSDKELDSC…IPSIAWPEKK (249 aa)).

Monomer, it undergoes transient dimerization following photoexcitation or upon temperature reduction, with a relaxation time of about 2 minutes. The dimer may be the inactive state. Interacts with the N- and C-terminal domains of BluR. Can also interact with the C-terminal domain of MlrA. Requires FAD as cofactor.

Functionally, binds to and releases the BluR repressor from its bound DNA target in a blue light-dependent (470 nm) fashion. A shift to low temperature also triggers a BluF-mediated relief of repression by BluR, suggesting BluF may serve as a thermometer. Blue light may act to increase the affinity of BluF for BluR, allowing it to be released from its operator. The protein has a reversible photocycle, and undergoes structural changes, probably in the EAL domain, in response to light. The protein is Blue light- and temperature-regulated antirepressor BluF of Escherichia coli (strain K12).